The sequence spans 783 residues: ATP-dependent zinc metalloprotease FtsH (783 aa).

A compositionally biased stretch (low complexity) spans Met1–Gln16. Residues Met1–Leu79 form a disordered region. Residues Met1–Arg86 are Cytoplasmic-facing. A compositionally biased stretch (basic and acidic residues) spans Met35 to Arg61. The helical transmembrane segment at Ala87 to Met107 threads the bilayer. The Extracellular segment spans residues Asn108–Val233. Residues Thr234–Phe254 form a helical membrane-spanning segment. The Cytoplasmic segment spans residues Ser255–Gln783. Gly325–Thr332 is a binding site for ATP. His547 contributes to the Zn(2+) binding site. Residue Glu548 is part of the active site. His551 and Asp623 together coordinate Zn(2+). Positions Glu738 to Val771 are enriched in low complexity. A disordered region spans residues Glu738–Gln783. Residues Pro772 to Gln783 show a composition bias toward pro residues.

This sequence in the central section; belongs to the AAA ATPase family. In the C-terminal section; belongs to the peptidase M41 family. In terms of assembly, homohexamer. The cofactor is Zn(2+).

The protein localises to the cell membrane. In terms of biological role, acts as a processive, ATP-dependent zinc metallopeptidase for both cytoplasmic and membrane proteins. Plays a role in the quality control of integral membrane proteins. This is ATP-dependent zinc metalloprotease FtsH from Slackia heliotrinireducens (strain ATCC 29202 / DSM 20476 / NCTC 11029 / RHS 1) (Peptococcus heliotrinreducens).